A 206-amino-acid chain; its full sequence is Probable nicotinate-nucleotide adenylyltransferase (206 aa).

It belongs to the NadD family.

It catalyses the reaction nicotinate beta-D-ribonucleotide + ATP + H(+) = deamido-NAD(+) + diphosphate. Its pathway is cofactor biosynthesis; NAD(+) biosynthesis; deamido-NAD(+) from nicotinate D-ribonucleotide: step 1/1. Its function is as follows. Catalyzes the reversible adenylation of nicotinate mononucleotide (NaMN) to nicotinic acid adenine dinucleotide (NaAD). This is Probable nicotinate-nucleotide adenylyltransferase from Gloeobacter violaceus (strain ATCC 29082 / PCC 7421).